Here is a 223-residue protein sequence, read N- to C-terminus: Phage shock protein A homolog (223 aa).

Residues 29–185 adopt a coiled-coil conformation; the sequence is IDQALRDMRS…AGMEDRNKAM (157 aa).

It belongs to the PspA/Vipp/IM30 family.

This chain is Phage shock protein A homolog, found in Deinococcus radiodurans (strain ATCC 13939 / DSM 20539 / JCM 16871 / CCUG 27074 / LMG 4051 / NBRC 15346 / NCIMB 9279 / VKM B-1422 / R1).